Here is a 160-residue protein sequence, read N- to C-terminus: Small ribosomal subunit protein uS9 (160 aa).

The protein belongs to the universal ribosomal protein uS9 family.

In Cereibacter sphaeroides (strain ATCC 17029 / ATH 2.4.9) (Rhodobacter sphaeroides), this protein is Small ribosomal subunit protein uS9.